A 159-amino-acid chain; its full sequence is Putative pre-16S rRNA nuclease (159 aa).

It belongs to the YqgF nuclease family.

It is found in the cytoplasm. Could be a nuclease involved in processing of the 5'-end of pre-16S rRNA. This is Putative pre-16S rRNA nuclease from Synechococcus sp. (strain JA-3-3Ab) (Cyanobacteria bacterium Yellowstone A-Prime).